Reading from the N-terminus, the 648-residue chain is Threonine--tRNA ligase (648 aa).

In terms of domain architecture, TGS spans 1-63; it reads MSQISLTFPD…AASGRIAINT (63 aa). Residues 247-544 form a catalytic region; that stretch reads DHRKLGREME…LIENYSGKLP (298 aa). Zn(2+) is bound by residues Cys344, His395, and His521.

This sequence belongs to the class-II aminoacyl-tRNA synthetase family. Homodimer. Requires Zn(2+) as cofactor.

It localises to the cytoplasm. It catalyses the reaction tRNA(Thr) + L-threonine + ATP = L-threonyl-tRNA(Thr) + AMP + diphosphate + H(+). Its function is as follows. Catalyzes the attachment of threonine to tRNA(Thr) in a two-step reaction: L-threonine is first activated by ATP to form Thr-AMP and then transferred to the acceptor end of tRNA(Thr). Also edits incorrectly charged L-seryl-tRNA(Thr). In Paracoccus denitrificans (strain Pd 1222), this protein is Threonine--tRNA ligase.